The sequence spans 184 residues: UPF0302 protein OB1778 (184 aa).

This sequence belongs to the UPF0302 family.

In Oceanobacillus iheyensis (strain DSM 14371 / CIP 107618 / JCM 11309 / KCTC 3954 / HTE831), this protein is UPF0302 protein OB1778.